Consider the following 270-residue polypeptide: A-type potassium channel modulatory protein KCNIP2 (270 aa).

Positions 1–17 are enriched in basic and acidic residues; sequence MRGQGRKESLSDSRDLD. Residues 1–32 are disordered; that stretch reads MRGQGRKESLSDSRDLDGSYDQLTGHPPGPTK. Phosphoserine is present on S9. Residues C45 and C46 are each lipidated (S-palmitoyl cysteine). Positions 81–137 constitute an EF-hand 1; degenerate domain; it reads FELSTVCHRPEGLEQLQEQTKFTRKELQVLYRGFKNECPSGIVNEENFKQIYSQFFP. EF-hand domains follow at residues 140–175, 176–211, and 224–259; these read DSST…ILRG, TVDD…IYDM, and APRE…DENI. Ca(2+) is bound by residues D153, N155, D157, S159, D164, D189, N191, D193, C195, E200, D237, N239, D241, and E248. The tract at residues 257–270 is interaction with KCND2; sequence ENIMRSMQLFDNVI.

The protein belongs to the recoverin family. Component of heteromultimeric potassium channels. Identified in potassium channel complexes containing KCND1, KCND2, KCND3, KCNIP1, KCNIP2, KCNIP3, KCNIP4, DPP6 and DPP10. The KCND2-KCNIP2 channel complex contains four KCND2 and four KCNIP2 subunits. Interacts with KCND2. Probably part of a complex consisting of KCNIP1, KCNIP2 isoform 3 and KCND2. At least isoform 2 and isoform 3 can self-associate to form homodimers and homotetramers. Isoform 3 interacts with KCNIP1 in a calcium-dependent manner. Interacts with KCND3; each KCNIP2 monomer interacts with two adjacent KCND3 subunits, through both the N-terminal inactivation ball of a KCND3 subunit and a C-terminal helix from the adjacent KCND3 subunit, clamping them together; this interaction modulates the channel gating kinetics. Palmitoylated. Palmitoylation enhances association with the plasma membrane. In terms of tissue distribution, expressed in brain. Colocalizes with KCND2 in excitatory neurons including cortical and hippocampal CA1 pyramidal cells. Isoform 3 is expressed in heart and in umbilical vein endothelial cells. Not expressed in fetal heart.

The protein resides in the cell membrane. Its function is as follows. Regulatory subunit of Kv4/D (Shal)-type voltage-gated rapidly inactivating A-type potassium channels. Modulates channel density, inactivation kinetics and rate of recovery from inactivation in a calcium-dependent and isoform-specific manner. Involved in KCND2 and KCND3 trafficking to the cell surface. May be required for the expression of I(To) currents in the heart. This chain is A-type potassium channel modulatory protein KCNIP2, found in Homo sapiens (Human).